The following is an 860-amino-acid chain: Leucine--tRNA ligase (860 aa).

The 'HIGH' region motif lies at Pro42 to His52. A 'KMSKS' region motif is present at residues Lys619 to Ser623. Lys622 provides a ligand contact to ATP.

The protein belongs to the class-I aminoacyl-tRNA synthetase family.

It is found in the cytoplasm. It carries out the reaction tRNA(Leu) + L-leucine + ATP = L-leucyl-tRNA(Leu) + AMP + diphosphate. The sequence is that of Leucine--tRNA ligase from Salmonella paratyphi B (strain ATCC BAA-1250 / SPB7).